The sequence spans 297 residues: Cyclin-dependent kinase 2 (297 aa).

A Protein kinase domain is found at 4–286 (FQKVEKIGEG…AKVALTHPFF (283 aa)). ATP contacts are provided by residues 10-18 (IGEGTYGVV), Lys33, 81-83 (EFL), and Asp86. The residue at position 14 (Thr14) is a Phosphothreonine. At Tyr15 the chain carries Phosphotyrosine. Asp127 acts as the Proton acceptor in catalysis. ATP-binding positions include 129-132 (KPQN) and Asp145. A Phosphothreonine; by CAK modification is found at Thr160.

Belongs to the protein kinase superfamily. CMGC Ser/Thr protein kinase family. CDC2/CDKX subfamily. In terms of assembly, interacts with spdya.

It catalyses the reaction L-seryl-[protein] + ATP = O-phospho-L-seryl-[protein] + ADP + H(+). The catalysed reaction is L-threonyl-[protein] + ATP = O-phospho-L-threonyl-[protein] + ADP + H(+). With respect to regulation, phosphorylation at Thr-14 or Tyr-15 inactivates the enzyme, while phosphorylation at Thr-160 activates it. Activated by spdya. Functionally, serine/threonine-protein kinase involved in the control of the cell cycle; essential for meiosis, but dispensable for mitosis. Triggers duplication of centrosomes and DNA. Acts at the G1-S transition to promote the E2F transcriptional program and the initiation of DNA synthesis, and modulates G2 progression; controls the timing of entry into mitosis/meiosis by controlling the subsequent activation of cyclin B/CDK1 by phosphorylation, and coordinates the activation of cyclin B/CDK1 at the centrosome and in the nucleus. Crucial role in orchestrating a fine balance between cellular proliferation, cell death, and DNA repair in embryonic stem cells (ESCs). Activity of CDK2 is maximal during S phase and G2; activated by interaction with cyclin E during the early stages of DNA synthesis to permit G1-S transition, and subsequently activated by cyclin A2 (cyclin A1 in germ cells) during the late stages of DNA replication to drive the transition from S phase to mitosis, the G2 phase. The chain is Cyclin-dependent kinase 2 (cdk2) from Xenopus laevis (African clawed frog).